The primary structure comprises 610 residues: MSRYFLLACTLALQCVAASQEDYIVKDLPGLSNIPAVVRPVMHAGHLEIDEEHNTELFFWRFQNPKNNGTHQTLHRNELIVWLNGGPGCSSMDGAMMETGPLRVSDKLEVELNPGSWTQVADILFVDQPAGTGFSYTDSYDTELKQAAQHFWQFLKTYYQLFPEDRTKKLYLAGESYAGQYIPYFAKEIIENNSLNISLEGLLIGNGWIDPDIQSLSYVPFSLEAGFLDRQSPSMAQVLKQHEKCQQAIDDPSNHDFEKVECVKIFHSILAASRDETKPAKEQCVNMYDYRKHDYFPACGSNWPEGLPTVTKFLNLDAVQKALNLKSAKRWHECDGKVEFFFQPEHSVKSFDLLPKLLEKMKIALFAGDKDIICNHKSIEMVIEKLQITPGQFGFTNSRKSGWIYDGQEVGEVETQSNLTYIKVFNSSHMVPYDLPEVSRGLFDIITNSIEKRSTDIVTPVYDSRGNYKFVEEKQDTDQNEEEEKEKPPKHHHSLTFYVAEVAILAVLAYLLYSFYKSFAKSRKSAFLSLSSKKKKKQVHWFDESDIGMDQEAGEADHKPKSMLESVFNKLGYGGQYDTVQDGRDIEMAPVEEHEDQFIIQSDEEEFGHR.

Positions 1–18 (MSRYFLLACTLALQCVAA) are cleaved as a signal peptide. Over 19–494 (SQEDYIVKDL…KEKPPKHHHS (476 aa)) the chain is Lumenal. A glycan (N-linked (GlcNAc...) asparagine) is linked at Asn-68. Ser-176 is a catalytic residue. Asn-192 and Asn-196 each carry an N-linked (GlcNAc...) asparagine glycan. The active site involves Asp-371. Asn-418 and Asn-426 each carry an N-linked (GlcNAc...) asparagine glycan. His-429 is an active-site residue. Positions 469 to 491 (KFVEEKQDTDQNEEEEKEKPPKH) are disordered. A helical membrane pass occupies residues 495–515 (LTFYVAEVAILAVLAYLLYSF). Topologically, residues 516-610 (YKSFAKSRKS…QSDEEEFGHR (95 aa)) are cytoplasmic.

It belongs to the peptidase S10 family.

It is found in the golgi apparatus. Its subcellular location is the trans-Golgi network membrane. It catalyses the reaction Preferential release of a C-terminal arginine or lysine residue.. In terms of biological role, protease with a carboxypeptidase B-like function involved in the C-terminal processing of the lysine and arginine residues from protein precursors. Promotes cell fusion and is involved in the programmed cell death. This Ogataea parapolymorpha (strain ATCC 26012 / BCRC 20466 / JCM 22074 / NRRL Y-7560 / DL-1) (Yeast) protein is Pheromone-processing carboxypeptidase KEX1 (KEX1).